The following is a 61-amino-acid chain: Large ribosomal subunit protein uL30 (61 aa).

It belongs to the universal ribosomal protein uL30 family. As to quaternary structure, part of the 50S ribosomal subunit.

In Corynebacterium urealyticum (strain ATCC 43042 / DSM 7109), this protein is Large ribosomal subunit protein uL30.